Consider the following 396-residue polypeptide: D-alanine--D-alanine ligase (396 aa).

The 207-residue stretch at 141–347 folds into the ATP-grasp domain; it reads KMLWQAAGLP…PQDLMAQLLS (207 aa). 174–229 contributes to the ATP binding site; sequence ETRLGYPLFVKPAQAGSSVGASAVQTRAPLIPAIEAAFQWDEVVLVERYVRAREIE. Mg(2+) is bound by residues Asp-301, Glu-314, and Asn-316. Residues 374 to 396 form a disordered region; that stretch reads AAHDPDAQGDDWDQRDSNPLPTA.

This sequence belongs to the D-alanine--D-alanine ligase family. The cofactor is Mg(2+). It depends on Mn(2+) as a cofactor.

It localises to the cytoplasm. The enzyme catalyses 2 D-alanine + ATP = D-alanyl-D-alanine + ADP + phosphate + H(+). It participates in cell wall biogenesis; peptidoglycan biosynthesis. Its function is as follows. Cell wall formation. The protein is D-alanine--D-alanine ligase of Treponema pallidum (strain Nichols).